The following is a 22-amino-acid chain: Chlorate reductase subunit gamma (22 aa).

The disordered stretch occupies residues 1–22; sequence EXSEQNPNILEIKPGDTVKVXT.

Heterotrimer of alpha, beta and gamma subunits. Heme b is required as a cofactor.

The protein localises to the cytoplasm. Its function is as follows. May transfer electrons to the iron-sulfur centers of the beta subunit of chlorate reductase. The protein is Chlorate reductase subunit gamma of Stutzerimonas chloritidismutans (Pseudomonas chloritidismutans).